The sequence spans 235 residues: MTDSQTETHLSLILSDTAFPLSSFSYSYGLESYLSHQQVRDVNAFFNFLPLSLNSVLHTNLPTVKAAWESPQQYSEIEDFFESTQTCTIAQKVSTMQGKSLLNIWTKSLSFFVTSTDVFKYLDEYERRVRSKKALGHFPVVWGVVCRALGLSLERTCYLFLLGHAKSICSAAVRLDVLTSFQYVSTLAHPQTESLLRDSSQLALNMQLEDTAQSWYTLDLWQGRHSLLYSRIFNS.

It belongs to the UreF family.

The protein localises to the cytoplasm. It localises to the nucleus. In terms of biological role, probably facilitates nickel incorporation. This is an uncharacterized protein from Schizosaccharomyces pombe (strain 972 / ATCC 24843) (Fission yeast).